A 734-amino-acid chain; its full sequence is NAD(P)H-quinone oxidoreductase subunit 5, chloroplastic (734 aa).

A run of 12 helical transmembrane segments spans residues 9–29 (WIIP…LFFF), 40–60 (YAII…DLLW), 89–109 (IDPL…TVMI), 121–140 (YVRF…GLVI), 144–166 (LIQI…GFWF), 185–205 (GDFG…SFKF), 219–239 (HEVS…GPVA), 258–278 (TPIS…FLVA), 289–311 (LVMS…VALA), 318–338 (VLAY…GIGS), 395–415 (GTTF…ACFW), and 425–445 (WLYF…TGFY). Residues 512-534 (DKNVKNSVSTQSSREEYSPHPKE) form a disordered region. Basic and acidic residues predominate over residues 524–534 (SREEYSPHPKE). 3 helical membrane-spanning segments follow: residues 539–559 (MLFP…IGVP), 601–621 (VGTA…IPFF), and 707–727 (ISYY…VVIN).

Belongs to the complex I subunit 5 family. In terms of assembly, NDH is composed of at least 16 different subunits, 5 of which are encoded in the nucleus.

It localises to the plastid. The protein localises to the chloroplast thylakoid membrane. The enzyme catalyses a plastoquinone + NADH + (n+1) H(+)(in) = a plastoquinol + NAD(+) + n H(+)(out). It carries out the reaction a plastoquinone + NADPH + (n+1) H(+)(in) = a plastoquinol + NADP(+) + n H(+)(out). Its function is as follows. NDH shuttles electrons from NAD(P)H:plastoquinone, via FMN and iron-sulfur (Fe-S) centers, to quinones in the photosynthetic chain and possibly in a chloroplast respiratory chain. The immediate electron acceptor for the enzyme in this species is believed to be plastoquinone. Couples the redox reaction to proton translocation, and thus conserves the redox energy in a proton gradient. This is NAD(P)H-quinone oxidoreductase subunit 5, chloroplastic (ndhF) from Huperzia lucidula (Shining clubmoss).